Consider the following 317-residue polypeptide: Forkhead box protein B2 (317 aa).

The segment at residues 13–107 (KPPYSYISLT…ENGSFLRRRK (95 aa)) is a DNA-binding region (fork-head).

As to expression, first expressed within the dorsolateral ectoderm, except for the organizer territory. During gastrulation, expressed in 2 ectodermal stripes adjacent to the dorsal midline. With the onset of neurulation, expression shifts first to the neural plate before settling on the bottom of the neural tube, on top of the notochord. Expression is then absent until stage 35, at which stage a pair of cells in the fourth rhombomere in the dorsolateral outer area of the rhombencephalon show expression. This is followed shortly afterwards by expression in a pair of cells in rhombomere 6 at the ventricular side of the rhombencephalon.

Its subcellular location is the nucleus. Transcription factor. This Xenopus laevis (African clawed frog) protein is Forkhead box protein B2.